Here is a 258-residue protein sequence, read N- to C-terminus: uncharacterized protein (258 aa).

5 consecutive transmembrane segments (helical) span residues 14–34, 53–73, 110–130, 185–205, and 238–258; these read LAFP…LAAI, VIIW…YFFV, AALC…WLAL, GLAL…GIIF, and GINT…AQLI.

Belongs to the TMEM19 family.

The protein resides in the cell membrane. This is an uncharacterized protein from Synechocystis sp. (strain ATCC 27184 / PCC 6803 / Kazusa).